A 601-amino-acid polypeptide reads, in one-letter code: Elongation factor 4 (601 aa).

The region spanning E5 to E187 is the tr-type G domain. GTP is bound by residues D17 to T22 and N134 to D137.

Belongs to the TRAFAC class translation factor GTPase superfamily. Classic translation factor GTPase family. LepA subfamily.

The protein resides in the cell inner membrane. The enzyme catalyses GTP + H2O = GDP + phosphate + H(+). Functionally, required for accurate and efficient protein synthesis under certain stress conditions. May act as a fidelity factor of the translation reaction, by catalyzing a one-codon backward translocation of tRNAs on improperly translocated ribosomes. Back-translocation proceeds from a post-translocation (POST) complex to a pre-translocation (PRE) complex, thus giving elongation factor G a second chance to translocate the tRNAs correctly. Binds to ribosomes in a GTP-dependent manner. In Nitratidesulfovibrio vulgaris (strain DSM 19637 / Miyazaki F) (Desulfovibrio vulgaris), this protein is Elongation factor 4.